The chain runs to 293 residues: 33 kDa chaperonin (293 aa).

Disulfide bonds link Cys-236–Cys-238 and Cys-269–Cys-272.

This sequence belongs to the HSP33 family. In terms of processing, under oxidizing conditions two disulfide bonds are formed involving the reactive cysteines. Under reducing conditions zinc is bound to the reactive cysteines and the protein is inactive.

The protein localises to the cytoplasm. Redox regulated molecular chaperone. Protects both thermally unfolding and oxidatively damaged proteins from irreversible aggregation. Plays an important role in the bacterial defense system toward oxidative stress. The chain is 33 kDa chaperonin from Lactobacillus delbrueckii subsp. bulgaricus (strain ATCC BAA-365 / Lb-18).